The sequence spans 472 residues: Aspartyl/glutamyl-tRNA(Asn/Gln) amidotransferase subunit B (472 aa).

It belongs to the GatB/GatE family. GatB subfamily. In terms of assembly, heterotrimer of A, B and C subunits.

It carries out the reaction L-glutamyl-tRNA(Gln) + L-glutamine + ATP + H2O = L-glutaminyl-tRNA(Gln) + L-glutamate + ADP + phosphate + H(+). It catalyses the reaction L-aspartyl-tRNA(Asn) + L-glutamine + ATP + H2O = L-asparaginyl-tRNA(Asn) + L-glutamate + ADP + phosphate + 2 H(+). Allows the formation of correctly charged Asn-tRNA(Asn) or Gln-tRNA(Gln) through the transamidation of misacylated Asp-tRNA(Asn) or Glu-tRNA(Gln) in organisms which lack either or both of asparaginyl-tRNA or glutaminyl-tRNA synthetases. The reaction takes place in the presence of glutamine and ATP through an activated phospho-Asp-tRNA(Asn) or phospho-Glu-tRNA(Gln). This is Aspartyl/glutamyl-tRNA(Asn/Gln) amidotransferase subunit B from Mycoplasmopsis agalactiae (strain NCTC 10123 / CIP 59.7 / PG2) (Mycoplasma agalactiae).